A 59-amino-acid chain; its full sequence is Temporin-CDYe (59 aa).

The signal sequence occupies residues 1–22 (MFTLKKSMLLLLFLGTISLTLC). A propeptide spanning residues 23-42 (EEERDANEEEENGGEVKVEE) is cleaved from the precursor.

The protein belongs to the frog skin active peptide (FSAP) family. Temporin subfamily. Expressed by the skin glands.

It localises to the secreted. Its function is as follows. Antimicrobial peptide. The protein is Temporin-CDYe of Rana dybowskii (Dybovsky's frog).